We begin with the raw amino-acid sequence, 155 residues long: Endoribonuclease YbeY (155 aa).

Zn(2+) is bound by residues His-117, His-121, and His-127.

This sequence belongs to the endoribonuclease YbeY family. It depends on Zn(2+) as a cofactor.

It is found in the cytoplasm. Functionally, single strand-specific metallo-endoribonuclease involved in late-stage 70S ribosome quality control and in maturation of the 3' terminus of the 16S rRNA. The sequence is that of Endoribonuclease YbeY from Psychrobacter cryohalolentis (strain ATCC BAA-1226 / DSM 17306 / VKM B-2378 / K5).